Here is a 60-residue protein sequence, read N- to C-terminus: Large ribosomal subunit protein uL30 (60 aa).

Belongs to the universal ribosomal protein uL30 family. In terms of assembly, part of the 50S ribosomal subunit.

This Streptococcus mutans serotype c (strain ATCC 700610 / UA159) protein is Large ribosomal subunit protein uL30.